The primary structure comprises 823 residues: Mitochondrial intermediate peptidase 2 (823 aa).

The transit peptide at 1 to 33 (MRRLQQSLRRRSARRCPFILIPHRLLTTSYASY) directs the protein to the mitochondrion. Residues 532–553 (IDGDGLPEDWDKPYGPGLEADK) form a disordered region. Histidine 595 lines the Zn(2+) pocket. Glutamate 596 is an active-site residue. Zn(2+) contacts are provided by histidine 599 and histidine 602.

It belongs to the peptidase M3 family. The cofactor is Zn(2+).

The protein resides in the mitochondrion matrix. It carries out the reaction Release of an N-terminal octapeptide as second stage of processing of some proteins imported into the mitochondrion.. Cleaves proteins, imported into the mitochondrion, to their mature size. While most mitochondrial precursor proteins are processed to the mature form in one step by mitochondrial processing peptidase (MPP), the sequential cleavage by MIP of an octapeptide after initial processing by MPP is a required step for a subgroup of nuclear-encoded precursor proteins destined for the matrix or the inner membrane. The polypeptide is Mitochondrial intermediate peptidase 2 (OCT2) (Cryptococcus neoformans var. neoformans serotype D (strain B-3501A) (Filobasidiella neoformans)).